The sequence spans 94 residues: DASH complex subunit DAD5 (94 aa).

Residues 1–20 (MRRSTIVPTSRTSSSSPSPS) show a composition bias toward low complexity. The interval 1 to 25 (MRRSTIVPTSRTSSSSPSPSQMKSF) is disordered.

The protein belongs to the DASH complex HSK3 family. In terms of assembly, component of the DASH complex consisting of ask1, dad1, dad2, dad3, dad4, dam1, duo1, dad5, spc19 and spc34, with a stoichiometry of one copy of each subunit per complex. Multiple DASH complexes oligomerize to form a ring that encircles spindle microtubules and organizes the rod-like NDC80 complexes of the outer kinetochore. DASH complex oligomerization strengthens microtubule attachments. On cytoplasmic microtubules, DASH complexes appear to form patches instead of rings.

The protein localises to the nucleus. Its subcellular location is the cytoplasm. It localises to the cytoskeleton. It is found in the spindle. The protein resides in the chromosome. The protein localises to the centromere. Its subcellular location is the kinetochore. Its function is as follows. Component of the DASH complex that connects microtubules with kinetochores and couples microtubule depolymerisation to chromosome movement; it is involved in retrieving kinetochores to the spindle poles before their re-orientation on the spindle in early mitosis and allows microtubule depolymerization to pull chromosomes apart and resist detachment during anaphase. Kinetochores, consisting of a centromere-associated inner segment and a microtubule-contacting outer segment, play a crucial role in chromosome segregation by mediating the physical connection between centromeric DNA and microtubules. Kinetochores also serve as an input point for the spindle assembly checkpoint, which delays anaphase until all chromosomes have bioriented on the mitotic spindle. The DASH complex mediates bipolar kinetochore-microtubule attachments and facilitates the formation of additional interactions between outer kinetochore components and spindle microtubules. During chromosome movement along the microtubule, it is required both for the sliding of kinetochores along the lateral side of the microtubule and also for microtubule end-on pulling on the kinetochore. Modulates cytoplasmic microtubule dynamics by tracking the plus-end of shortening microtubules and slowing their depolymerization. The sequence is that of DASH complex subunit DAD5 from Schizosaccharomyces pombe (strain 972 / ATCC 24843) (Fission yeast).